The primary structure comprises 356 residues: Uroporphyrinogen decarboxylase (356 aa).

Residues 27 to 31, aspartate 77, tyrosine 154, threonine 209, and histidine 327 contribute to the substrate site; that span reads RQAGR.

This sequence belongs to the uroporphyrinogen decarboxylase family. As to quaternary structure, homodimer.

The protein resides in the cytoplasm. It catalyses the reaction uroporphyrinogen III + 4 H(+) = coproporphyrinogen III + 4 CO2. It participates in porphyrin-containing compound metabolism; protoporphyrin-IX biosynthesis; coproporphyrinogen-III from 5-aminolevulinate: step 4/4. Catalyzes the decarboxylation of four acetate groups of uroporphyrinogen-III to yield coproporphyrinogen-III. This chain is Uroporphyrinogen decarboxylase, found in Cellvibrio japonicus (strain Ueda107) (Pseudomonas fluorescens subsp. cellulosa).